The sequence spans 188 residues: dCTP deaminase (188 aa).

DCTP-binding positions include 111 to 116 (KSTYAR), 135 to 137 (TLE), Q156, Y170, and Q180. The Proton donor/acceptor role is filled by E137.

Belongs to the dCTP deaminase family. As to quaternary structure, homotrimer.

It carries out the reaction dCTP + H2O + H(+) = dUTP + NH4(+). The protein operates within pyrimidine metabolism; dUMP biosynthesis; dUMP from dCTP (dUTP route): step 1/2. In terms of biological role, catalyzes the deamination of dCTP to dUTP. This Pseudomonas fluorescens (strain SBW25) protein is dCTP deaminase.